Reading from the N-terminus, the 272-residue chain is uncharacterized protein (272 aa).

Belongs to the sodium:galactoside symporter (TC 2.A.2) family.

This is an uncharacterized protein from Pseudescherichia vulneris (Escherichia vulneris).